The primary structure comprises 539 residues: Phosphoenolpyruvate carboxykinase (ATP) (539 aa).

3 residues coordinate substrate: arginine 64, tyrosine 206, and lysine 212. Residues lysine 212, histidine 231, and glycine 247–threonine 255 each bind ATP. Mn(2+)-binding residues include lysine 212 and histidine 231. Position 268 (aspartate 268) interacts with Mn(2+). ATP-binding positions include glutamate 296, arginine 332, arginine 448 to isoleucine 449, and threonine 454. Arginine 332 contacts substrate.

Belongs to the phosphoenolpyruvate carboxykinase (ATP) family. As to quaternary structure, monomer. Mn(2+) serves as cofactor.

It localises to the cytoplasm. The enzyme catalyses oxaloacetate + ATP = phosphoenolpyruvate + ADP + CO2. Its pathway is carbohydrate biosynthesis; gluconeogenesis. Functionally, involved in the gluconeogenesis. Catalyzes the conversion of oxaloacetate (OAA) to phosphoenolpyruvate (PEP) through direct phosphoryl transfer between the nucleoside triphosphate and OAA. The chain is Phosphoenolpyruvate carboxykinase (ATP) from Edwardsiella ictaluri (strain 93-146).